A 417-amino-acid chain; its full sequence is Exodeoxyribonuclease 7 large subunit (417 aa).

It belongs to the XseA family. Heterooligomer composed of large and small subunits.

It localises to the cytoplasm. It carries out the reaction Exonucleolytic cleavage in either 5'- to 3'- or 3'- to 5'-direction to yield nucleoside 5'-phosphates.. In terms of biological role, bidirectionally degrades single-stranded DNA into large acid-insoluble oligonucleotides, which are then degraded further into small acid-soluble oligonucleotides. The sequence is that of Exodeoxyribonuclease 7 large subunit from Helicobacter hepaticus (strain ATCC 51449 / 3B1).